Here is a 90-residue protein sequence, read N- to C-terminus: Putative UPF0401 protein YpjI (90 aa).

It belongs to the UPF0401 family.

This Escherichia coli (strain K12) protein is Putative UPF0401 protein YpjI (ypjI).